Here is a 469-residue protein sequence, read N- to C-terminus: Ribulose bisphosphate carboxylase large chain (469 aa).

Lysine 5 bears the N6,N6,N6-trimethyllysine mark. The substrate site is built by asparagine 114 and threonine 164. Lysine 166 acts as the Proton acceptor in catalysis. Lysine 168 is a substrate binding site. Mg(2+) contacts are provided by lysine 192, aspartate 194, and glutamate 195. Lysine 192 bears the N6-carboxylysine mark. The Proton acceptor role is filled by histidine 285. Substrate is bound by residues arginine 286, histidine 318, and serine 370.

It belongs to the RuBisCO large chain family. Type I subfamily. In terms of assembly, heterohexadecamer of 8 large chains and 8 small chains; disulfide-linked. The disulfide link is formed within the large subunit homodimers. It depends on Mg(2+) as a cofactor. The disulfide bond which can form in the large chain dimeric partners within the hexadecamer appears to be associated with oxidative stress and protein turnover.

Its subcellular location is the plastid. It localises to the chloroplast. It catalyses the reaction 2 (2R)-3-phosphoglycerate + 2 H(+) = D-ribulose 1,5-bisphosphate + CO2 + H2O. It carries out the reaction D-ribulose 1,5-bisphosphate + O2 = 2-phosphoglycolate + (2R)-3-phosphoglycerate + 2 H(+). Its function is as follows. RuBisCO catalyzes two reactions: the carboxylation of D-ribulose 1,5-bisphosphate, the primary event in carbon dioxide fixation, as well as the oxidative fragmentation of the pentose substrate in the photorespiration process. Both reactions occur simultaneously and in competition at the same active site. The polypeptide is Ribulose bisphosphate carboxylase large chain (Calycophyllum candidissimum (Degame lemonwood tree)).